The sequence spans 237 residues: NAD-dependent protein deacylase (237 aa).

Residues Met-1 to Leu-235 form the Deacetylase sirtuin-type domain. Position 8-28 (Gly-8–Trp-28) interacts with NAD(+). Substrate is bound by residues Tyr-53 and Arg-56. Gln-86 to Asp-89 is an NAD(+) binding site. His-104 serves as the catalytic Proton acceptor. Residues Cys-112, Cys-115, Cys-138, and Cys-140 each coordinate Zn(2+). Residues Gly-177 to Ser-179, Asn-203 to Glu-205, and Ala-221 each bind NAD(+).

This sequence belongs to the sirtuin family. Class III subfamily. It depends on Zn(2+) as a cofactor.

It localises to the cytoplasm. It catalyses the reaction N(6)-acetyl-L-lysyl-[protein] + NAD(+) + H2O = 2''-O-acetyl-ADP-D-ribose + nicotinamide + L-lysyl-[protein]. It carries out the reaction N(6)-succinyl-L-lysyl-[protein] + NAD(+) + H2O = 2''-O-succinyl-ADP-D-ribose + nicotinamide + L-lysyl-[protein]. Its function is as follows. NAD-dependent lysine deacetylase and desuccinylase that specifically removes acetyl and succinyl groups on target proteins. Modulates the activities of several proteins which are inactive in their acylated form. The protein is NAD-dependent protein deacylase of Mycobacterium bovis (strain ATCC BAA-935 / AF2122/97).